We begin with the raw amino-acid sequence, 369 residues long: Coproporphyrin III ferrochelatase (369 aa).

Fe-coproporphyrin III contacts are provided by serine 61 and tyrosine 130. Fe(2+) contacts are provided by histidine 197 and glutamate 286.

Belongs to the ferrochelatase family.

The protein localises to the cytoplasm. The catalysed reaction is Fe-coproporphyrin III + 2 H(+) = coproporphyrin III + Fe(2+). It participates in porphyrin-containing compound metabolism; protoheme biosynthesis. Functionally, involved in coproporphyrin-dependent heme b biosynthesis. Catalyzes the insertion of ferrous iron into coproporphyrin III to form Fe-coproporphyrin III. The chain is Coproporphyrin III ferrochelatase from Corynebacterium diphtheriae (strain ATCC 700971 / NCTC 13129 / Biotype gravis).